We begin with the raw amino-acid sequence, 379 residues long: tRNA-specific 2-thiouridylase MnmA (379 aa).

ATP-binding positions include 6–13 (AMSGGVDS) and Leu32. The active-site Nucleophile is Cys101. An intrachain disulfide couples Cys101 to Cys199. Gly125 contributes to the ATP binding site. Residues 148 to 150 (KDQ) form an interaction with tRNA region. Cys199 acts as the Cysteine persulfide intermediate in catalysis.

The protein belongs to the MnmA/TRMU family.

It localises to the cytoplasm. It carries out the reaction S-sulfanyl-L-cysteinyl-[protein] + uridine(34) in tRNA + AH2 + ATP = 2-thiouridine(34) in tRNA + L-cysteinyl-[protein] + A + AMP + diphosphate + H(+). In terms of biological role, catalyzes the 2-thiolation of uridine at the wobble position (U34) of tRNA, leading to the formation of s(2)U34. The protein is tRNA-specific 2-thiouridylase MnmA of Paenarthrobacter aurescens (strain TC1).